Consider the following 415-residue polypeptide: MRLKRMHIRYYPPGIFLDYEKGGQLRTKCIDLLNLTPETDVEELVLEIRAAEPLITSSCVEQVKLLICKLQEKVGQKDERKFYLFRALQAHILPLTNVAFNKSGSCFITGSYDRTCKIWDTASGEELHTLEGHRNVVYAIAFNNPYGDKVATGSFDKTCKLWSAETGKCFYTFRGHTAEIVCLAFNPQSTLVATGSMDTTAKLWDVESGEEVSTLAGHFAEIISLCFNTTGDRLVTGSFDHTAILWDVPSGRKVHVLSGHRGEISCVQFNWDCSLIATASLDKSCKVWDAEGGQCLATLLGHNDEVLDVCFNYTGQLIATASADGTSRVFSTDTFQCLCQLEGHKGEISKVCFNAQGSRVLTASVDKTSRVWCVKTGACLQVLEGHSDEIFSCAFNYEGDTIITGSKDNTCRIWH.

8 WD repeats span residues 90 to 129, 132 to 172, 175 to 214, 217 to 256, 259 to 298, 301 to 340, 343 to 384, and 385 to 415; these read AHIL…ELHT, GHRN…CFYT, GHTA…EVST, GHFA…KVHV, GHRG…CLAT, GHND…CLCQ, GHKG…QVLE, and GHSD…RIWH.

This sequence belongs to the WD repeat WDR69 family. In terms of tissue distribution, expressed in organs bearing motile cilia, including the pronephros, otic vesicles and Kupffer's vesicle.

The protein resides in the cytoplasm. The protein localises to the cytoskeleton. It localises to the flagellum basal body. It is found in the flagellum axoneme. Functionally, required for axonemal dynein assembly and ciliary motility in ciliated organs, including Kupffer's vesicle, during embryogenesis. Facilitates the onset of robust cilia motility during development. The protein is Dynein assembly factor with WD repeat domains 1 (daw1) of Danio rerio (Zebrafish).